The following is a 606-amino-acid chain: EPM2A-interacting protein 1 (606 aa).

Position 147 is a phosphoserine (S147).

In terms of assembly, interacts with EPM2A.

It localises to the endoplasmic reticulum. This is EPM2A-interacting protein 1 (Epm2aip1) from Mus musculus (Mouse).